Consider the following 274-residue polypeptide: 2,3,4,5-tetrahydropyridine-2,6-dicarboxylate N-succinyltransferase (274 aa).

Substrate-binding residues include R106 and D143.

This sequence belongs to the transferase hexapeptide repeat family. In terms of assembly, homotrimer.

The protein localises to the cytoplasm. The enzyme catalyses (S)-2,3,4,5-tetrahydrodipicolinate + succinyl-CoA + H2O = (S)-2-succinylamino-6-oxoheptanedioate + CoA. Its pathway is amino-acid biosynthesis; L-lysine biosynthesis via DAP pathway; LL-2,6-diaminopimelate from (S)-tetrahydrodipicolinate (succinylase route): step 1/3. The protein is 2,3,4,5-tetrahydropyridine-2,6-dicarboxylate N-succinyltransferase of Rickettsia typhi (strain ATCC VR-144 / Wilmington).